Consider the following 497-residue polypeptide: uncharacterized protein (497 aa).

Residues 44–74 are compositionally biased toward basic and acidic residues; the sequence is IRQEKEMKRHDDDGRQYQSDRKFAKSKHDDI. Disordered regions lie at residues 44-95, 120-151, and 195-227; these read IRQE…SVGR, VSRS…EHRD, and GNVI…TSAR. Over residues 120 to 131 the composition is skewed to low complexity; that stretch reads VSRSSSIGHSGS. Phosphoserine is present on residues Ser-123, Ser-125, and Ser-131. At Thr-132 the chain carries Phosphothreonine. Low complexity predominate over residues 213-227; the sequence is ASLSRAASNSSTSAR. Thr-258 bears the Phosphothreonine mark. A Phosphoserine modification is found at Ser-310. Residues 367–385 show a composition bias toward polar residues; the sequence is NVNPSNQDLASVKQPSGFS. The disordered stretch occupies residues 367-497; that stretch reads NVNPSNQDLA…GFPDTSRPPH (131 aa). The span at 400 to 409 shows a compositional bias: low complexity; the sequence is NFSNDDSSFF. Ser-436 bears the Phosphoserine mark. The segment covering 448 to 472 has biased composition (low complexity); that stretch reads GLSSGASIPSAPPGFGYQQPSFPYS.

It localises to the cytoplasm. Its subcellular location is the nucleus. This is an uncharacterized protein from Schizosaccharomyces pombe (strain 972 / ATCC 24843) (Fission yeast).